The chain runs to 216 residues: DNA gyrase subunit B (216 aa).

The region spanning 140 to 216 is the Toprim domain; the sequence is SELYLVEGDS…PDKLRYHKII (77 aa).

It belongs to the type II topoisomerase GyrB family. As to quaternary structure, heterotetramer, composed of two GyrA and two GyrB chains. In the heterotetramer, GyrA contains the active site tyrosine that forms a transient covalent intermediate with DNA, while GyrB binds cofactors and catalyzes ATP hydrolysis.

The protein localises to the cytoplasm. The catalysed reaction is ATP-dependent breakage, passage and rejoining of double-stranded DNA.. Its function is as follows. A type II topoisomerase that negatively supercoils closed circular double-stranded (ds) DNA in an ATP-dependent manner to modulate DNA topology and maintain chromosomes in an underwound state. Negative supercoiling favors strand separation, and DNA replication, transcription, recombination and repair, all of which involve strand separation. Also able to catalyze the interconversion of other topological isomers of dsDNA rings, including catenanes and knotted rings. Type II topoisomerases break and join 2 DNA strands simultaneously in an ATP-dependent manner. The polypeptide is DNA gyrase subunit B (gyrB) (Acinetobacter bereziniae (Acinetobacter genomosp. 10)).